Consider the following 552-residue polypeptide: Methyl-coenzyme M reductase II subunit alpha (552 aa).

Position 150 (Q150) interacts with coenzyme F430. Coenzyme B-binding positions include R228, 259–260, and R273; that span reads KH. Coenzyme M-binding residues include Y335 and Y446.

Belongs to the methyl-coenzyme M reductase alpha subunit family. In terms of assembly, MCR is a hexamer of two alpha, two beta, and two gamma chains, forming a dimer of heterotrimers. It depends on coenzyme F430 as a cofactor.

It catalyses the reaction coenzyme B + methyl-coenzyme M = methane + coenzyme M-coenzyme B heterodisulfide. Its pathway is one-carbon metabolism; methyl-coenzyme M reduction; methane from methyl-coenzyme M: step 1/1. Component of the methyl-coenzyme M reductase (MCR) I that catalyzes the reductive cleavage of methyl-coenzyme M (CoM-S-CH3 or 2-(methylthio)ethanesulfonate) using coenzyme B (CoB or 7-mercaptoheptanoylthreonine phosphate) as reductant which results in the production of methane and the mixed heterodisulfide of CoB and CoM (CoM-S-S-CoB). This is the final step in methanogenesis. This chain is Methyl-coenzyme M reductase II subunit alpha (mrtA), found in Methanocaldococcus jannaschii (strain ATCC 43067 / DSM 2661 / JAL-1 / JCM 10045 / NBRC 100440) (Methanococcus jannaschii).